Reading from the N-terminus, the 466-residue chain is tRNA dimethylallyltransferase 2 (466 aa).

27 to 34 (GPTGSGKS) is a binding site for ATP. A substrate-binding site is contributed by 29-34 (TGSGKS). An interaction with substrate tRNA region spans residues 52 to 55 (DAMQ). Residues 433 to 466 (WEHHKQGRTHRKRTTRHKNSQTYKNREVQEAEVN) form a disordered region. Residues 437 to 451 (KQGRTHRKRTTRHKN) are compositionally biased toward basic residues. The segment covering 456–466 (KNREVQEAEVN) has biased composition (basic and acidic residues).

This sequence belongs to the IPP transferase family. Mg(2+) serves as cofactor. As to expression, expressed ubiquitously, with highest expression in proliferating tissues.

It is found in the cytoplasm. It carries out the reaction adenosine(37) in tRNA + dimethylallyl diphosphate = N(6)-dimethylallyladenosine(37) in tRNA + diphosphate. Functionally, catalyzes the transfer of a dimethylallyl group onto the adenine at position 37 in tRNAs that read codons beginning with uridine, leading to the formation of N6-(dimethylallyl)adenosine (i(6)A). Involved in the cis-type cytokinin biosynthesis. The sequence is that of tRNA dimethylallyltransferase 2 (IPT2) from Arabidopsis thaliana (Mouse-ear cress).